Reading from the N-terminus, the 555-residue chain is Glucose-6-phosphate isomerase (555 aa).

Residue E355 is the Proton donor of the active site. Catalysis depends on residues H386 and K514.

The protein belongs to the GPI family.

The protein resides in the cytoplasm. The catalysed reaction is alpha-D-glucose 6-phosphate = beta-D-fructose 6-phosphate. It functions in the pathway carbohydrate biosynthesis; gluconeogenesis. Its pathway is carbohydrate degradation; glycolysis; D-glyceraldehyde 3-phosphate and glycerone phosphate from D-glucose: step 2/4. Catalyzes the reversible isomerization of glucose-6-phosphate to fructose-6-phosphate. This is Glucose-6-phosphate isomerase from Buchnera aphidicola subsp. Schizaphis graminum (strain Sg).